The following is a 1133-amino-acid chain: Fas-binding factor 1 (1133 aa).

2 disordered regions span residues 89-198 and 211-544; these read LGLK…TPIR and IMAT…VPVQ. Positions 102–113 are enriched in basic and acidic residues; sequence AAKDPGKGELPN. Residues 125-134 are compositionally biased toward low complexity; it reads KKSLPSPSSS. A Phosphoserine modification is found at serine 142. Positions 165–182 are enriched in polar residues; that stretch reads PPVTQSKTASDKSPSTVR. 2 stretches are compositionally biased toward basic and acidic residues: residues 221–245 and 259–276; these read PKAE…DELL and TGEH…RPQD. The span at 277 to 286 shows a compositional bias: acidic residues; it reads SEDMWGDEDF. Low complexity predominate over residues 295-310; that stretch reads VVSSEGRQSRRQSVSR. A compositionally biased stretch (polar residues) spans 325-336; that stretch reads SKQSPPMASSPI. Residues 415–424 are compositionally biased toward basic and acidic residues; it reads ASKEEKEDWL. Residues 459 to 469 are compositionally biased toward polar residues; that stretch reads SGSQPLTSTQG. Residues 473 to 482 are compositionally biased toward low complexity; sequence AAAGGSSGTT. 2 coiled-coil regions span residues 577–727 and 773–870; these read AELQ…VDAA and IRQR…EEQK. A Glycyl lysine isopeptide (Lys-Gly) (interchain with G-Cter in SUMO2) cross-link involves residue lysine 960. The interval 1062–1085 is disordered; that stretch reads AASSQSALMPPAPTTRWCSQPPTG.

May interact with FAS cytoplasmic domain. Interacts with PARD3. Interacts with TRAPPC14. As to expression, present in various epithelial cells (at protein level).

Its subcellular location is the cytoplasm. It localises to the cytoskeleton. The protein localises to the microtubule organizing center. The protein resides in the centrosome. It is found in the centriole. Its subcellular location is the spindle pole. It localises to the cell junction. In terms of biological role, keratin-binding protein required for epithelial cell polarization. Involved in apical junction complex (AJC) assembly via its interaction with PARD3. Required for ciliogenesis. In Homo sapiens (Human), this protein is Fas-binding factor 1 (FBF1).